A 368-amino-acid polypeptide reads, in one-letter code: DNA replication and repair protein RecF (368 aa).

30–37 (GDNGAGKT) serves as a coordination point for ATP.

This sequence belongs to the RecF family.

It localises to the cytoplasm. Functionally, the RecF protein is involved in DNA metabolism; it is required for DNA replication and normal SOS inducibility. RecF binds preferentially to single-stranded, linear DNA. It also seems to bind ATP. The chain is DNA replication and repair protein RecF from Xanthomonas axonopodis pv. citri (strain 306).